The sequence spans 512 residues: Cytoplasmic tRNA 2-thiolation protein 2-B (512 aa).

The disordered stretch occupies residues 196 to 215 (VTDSDSPGSSDKMYQSTCSR). Over residues 199-214 (SDSPGSSDKMYQSTCS) the composition is skewed to polar residues.

Belongs to the CTU2/NCS2 family.

It localises to the cytoplasm. The protein operates within tRNA modification; 5-methoxycarbonylmethyl-2-thiouridine-tRNA biosynthesis. Plays a central role in 2-thiolation of mcm(5)S(2)U at tRNA wobble positions of tRNA(Lys), tRNA(Glu) and tRNA(Gln). May act by forming a heterodimer with ctu1/atpbd3 that ligates sulfur from thiocarboxylated urm1 onto the uridine of tRNAs at wobble position. The sequence is that of Cytoplasmic tRNA 2-thiolation protein 2-B (ctu2-b) from Xenopus laevis (African clawed frog).